Consider the following 441-residue polypeptide: Chromosomal replication initiator protein DnaA (441 aa).

Residues Met1–Phe71 are domain I, interacts with DnaA modulators. The domain II stretch occupies residues Phe71–Ser99. The segment at Asp100–Lys318 is domain III, AAA+ region. ATP contacts are provided by Gly143, Gly145, Lys146, and Thr147. The segment at Lys319–Gln441 is domain IV, binds dsDNA.

The protein belongs to the DnaA family. Oligomerizes as a right-handed, spiral filament on DNA at oriC.

It is found in the cytoplasm. Plays an essential role in the initiation and regulation of chromosomal replication. ATP-DnaA binds to the origin of replication (oriC) to initiate formation of the DNA replication initiation complex once per cell cycle. Binds the DnaA box (a 9 base pair repeat at the origin) and separates the double-stranded (ds)DNA. Forms a right-handed helical filament on oriC DNA; dsDNA binds to the exterior of the filament while single-stranded (ss)DNA is stabiized in the filament's interior. The ATP-DnaA-oriC complex binds and stabilizes one strand of the AT-rich DNA unwinding element (DUE), permitting loading of DNA polymerase. After initiation quickly degrades to an ADP-DnaA complex that is not apt for DNA replication. Binds acidic phospholipids. In Leptospira biflexa serovar Patoc (strain Patoc 1 / Ames), this protein is Chromosomal replication initiator protein DnaA.